The sequence spans 459 residues: Glycosyl hydrolase family 109 protein 1 (459 aa).

A signal peptide (tat-type signal) is located at residues 1–31; that stretch reads MHNIHRRHFLKAAGAVTAGLVTANIALNANA. NAD(+) is bound by residues 64–65, Asp-86, 135–138, 155–156, and Asn-184; these read ER, WEWH, and EV. Substrate contacts are provided by residues Tyr-213, Arg-232, 244–247, and Tyr-326; that span reads YPTH. Tyr-244 contacts NAD(+).

Belongs to the Gfo/Idh/MocA family. Glycosyl hydrolase 109 subfamily. Requires NAD(+) as cofactor. In terms of processing, predicted to be exported by the Tat system. The position of the signal peptide cleavage has not been experimentally proven.

In terms of biological role, glycosidase. The polypeptide is Glycosyl hydrolase family 109 protein 1 (Shewanella sp. (strain MR-7)).